Consider the following 212-residue polypeptide: Deoxyribose-phosphate aldolase (212 aa).

Catalysis depends on D90, which acts as the Proton donor/acceptor. K151 (schiff-base intermediate with acetaldehyde) is an active-site residue. The Proton donor/acceptor role is filled by K176.

This sequence belongs to the DeoC/FbaB aldolase family. DeoC type 1 subfamily.

The protein resides in the cytoplasm. It catalyses the reaction 2-deoxy-D-ribose 5-phosphate = D-glyceraldehyde 3-phosphate + acetaldehyde. It participates in carbohydrate degradation; 2-deoxy-D-ribose 1-phosphate degradation; D-glyceraldehyde 3-phosphate and acetaldehyde from 2-deoxy-alpha-D-ribose 1-phosphate: step 2/2. Its function is as follows. Catalyzes a reversible aldol reaction between acetaldehyde and D-glyceraldehyde 3-phosphate to generate 2-deoxy-D-ribose 5-phosphate. This is Deoxyribose-phosphate aldolase from Halobacterium salinarum (strain ATCC 29341 / DSM 671 / R1).